We begin with the raw amino-acid sequence, 125 residues long: Secreted RxLR effector protein 22 (125 aa).

A signal peptide spans 1–26 (MRLIYSALVTAAAMVAISNGSTPARG). The interval 21-66 (STPARGNEVETRSLRGGNEVDSSMSDDGERAARGGGRVRSQASGVT) is disordered. Residues 32 to 50 (RSLRGGNEVDSSMSDDGER) carry the RxLR-dEER motif.

It belongs to the RxLR effector family.

Its subcellular location is the secreted. The protein localises to the host nucleus. Functionally, effector that acts as a broad suppressor of cell death to interrupt plant immunity. Inhibits cell death induced by cell death-inducing proteins, including the PAMP elicitor INF1 from P.infestans. This is Secreted RxLR effector protein 22 from Plasmopara viticola (Downy mildew of grapevine).